Consider the following 231-residue polypeptide: Uracil-DNA glycosylase (231 aa).

Catalysis depends on D74, which acts as the Proton acceptor.

This sequence belongs to the uracil-DNA glycosylase (UDG) superfamily. UNG family.

It localises to the cytoplasm. It carries out the reaction Hydrolyzes single-stranded DNA or mismatched double-stranded DNA and polynucleotides, releasing free uracil.. Excises uracil residues from the DNA which can arise as a result of misincorporation of dUMP residues by DNA polymerase or due to deamination of cytosine. The protein is Uracil-DNA glycosylase of Campylobacter jejuni subsp. jejuni serotype O:23/36 (strain 81-176).